A 131-amino-acid polypeptide reads, in one-letter code: Small ribosomal subunit protein uS11 (131 aa).

It belongs to the universal ribosomal protein uS11 family. In terms of assembly, part of the 30S ribosomal subunit. Interacts with proteins S7 and S18. Binds to IF-3.

Its function is as follows. Located on the platform of the 30S subunit, it bridges several disparate RNA helices of the 16S rRNA. Forms part of the Shine-Dalgarno cleft in the 70S ribosome. The sequence is that of Small ribosomal subunit protein uS11 from Trichormus variabilis (strain ATCC 29413 / PCC 7937) (Anabaena variabilis).